The following is a 189-amino-acid chain: UPF0312 protein VPA0850 (189 aa).

Positions 1 to 22 are cleaved as a signal peptide; the sequence is MKKSLFATGLAIAMALPLGAQA.

It belongs to the UPF0312 family. Type 1 subfamily.

The protein localises to the periplasm. This Vibrio parahaemolyticus serotype O3:K6 (strain RIMD 2210633) protein is UPF0312 protein VPA0850.